A 1391-amino-acid chain; its full sequence is DNA-directed RNA polymerase subunit beta' (1391 aa).

Zn(2+) is bound by residues Cys70, Cys72, Cys85, and Cys88. Residues Asp461, Asp463, and Asp465 each coordinate Mg(2+). 4 residues coordinate Zn(2+): Cys809, Cys882, Cys889, and Cys892.

This sequence belongs to the RNA polymerase beta' chain family. In terms of assembly, the RNAP catalytic core consists of 2 alpha, 1 beta, 1 beta' and 1 omega subunit. When a sigma factor is associated with the core the holoenzyme is formed, which can initiate transcription. Requires Mg(2+) as cofactor. Zn(2+) is required as a cofactor.

The enzyme catalyses RNA(n) + a ribonucleoside 5'-triphosphate = RNA(n+1) + diphosphate. Functionally, DNA-dependent RNA polymerase catalyzes the transcription of DNA into RNA using the four ribonucleoside triphosphates as substrates. The polypeptide is DNA-directed RNA polymerase subunit beta' (Zymomonas mobilis subsp. mobilis (strain ATCC 31821 / ZM4 / CP4)).